Consider the following 314-residue polypeptide: Protoheme IX farnesyltransferase (314 aa).

The next 8 membrane-spanning stretches (helical) occupy residues 30-50 (VMSL…VSVH), 51-71 (PVIG…SGAL), 122-142 (FLAA…YSMW), 151-171 (IVIG…IATG), 178-198 (WLMF…LALF), 224-244 (IIAY…SAIG), 247-267 (VYLA…IDIW), and 285-305 (FFRL…LESA).

This sequence belongs to the UbiA prenyltransferase family. Protoheme IX farnesyltransferase subfamily. Interacts with CtaA.

Its subcellular location is the cell inner membrane. The enzyme catalyses heme b + (2E,6E)-farnesyl diphosphate + H2O = Fe(II)-heme o + diphosphate. The protein operates within porphyrin-containing compound metabolism; heme O biosynthesis; heme O from protoheme: step 1/1. Converts heme B (protoheme IX) to heme O by substitution of the vinyl group on carbon 2 of heme B porphyrin ring with a hydroxyethyl farnesyl side group. The chain is Protoheme IX farnesyltransferase from Roseobacter denitrificans (strain ATCC 33942 / OCh 114) (Erythrobacter sp. (strain OCh 114)).